The sequence spans 186 residues: Large ribosomal subunit protein uL22 (186 aa).

The tract at residues 161–186 (VDDEPAKKKLSKKKLQRQKEKMLRSE) is disordered. The segment covering 177-186 (RQKEKMLRSE) has biased composition (basic and acidic residues).

The protein belongs to the universal ribosomal protein uL22 family.

The chain is Large ribosomal subunit protein uL22 (RpL17) from Drosophila pseudoobscura pseudoobscura (Fruit fly).